Here is a 70-residue protein sequence, read N- to C-terminus: MFTLKKSMLLLFFLGTINLSLCEEERNAEEERRDEPDEMDVEVEKRFLPVIAGVAAKFLPKIFCAITKKC.

The signal sequence occupies residues 1 to 22 (MFTLKKSMLLLFFLGTINLSLC). Positions 23–44 (EEERNAEEERRDEPDEMDVEVE) are excised as a propeptide. An intrachain disulfide couples cysteine 64 to cysteine 70.

Expressed by the skin glands.

The protein resides in the secreted. Antimicrobial activity against the Gram-negative bacterium E.coli, the Gram-positive bacterium S.aureus and the yeast C.albicans. The sequence is that of Brevinin-1PLc from Lithobates palustris (Pickerel frog).